A 213-amino-acid polypeptide reads, in one-letter code: UPF0301 protein Aave_0907 (213 aa).

Residues 93–120 (MGPSSGKQAAGEGGAQAEGEGAEESAYA) form a disordered region.

Belongs to the UPF0301 (AlgH) family.

This chain is UPF0301 protein Aave_0907, found in Paracidovorax citrulli (strain AAC00-1) (Acidovorax citrulli).